A 31-amino-acid chain; its full sequence is Cytochrome b6-f complex subunit 6 (31 aa).

The chain crosses the membrane as a helical span at residues 4-24; sequence LTSYFGFLLAALTITLALFIG.

The protein belongs to the PetL family. In terms of assembly, the 4 large subunits of the cytochrome b6-f complex are cytochrome b6, subunit IV (17 kDa polypeptide, PetD), cytochrome f and the Rieske protein, while the 4 small subunits are PetG, PetL, PetM and PetN. The complex functions as a dimer.

It localises to the plastid. The protein localises to the chloroplast thylakoid membrane. Component of the cytochrome b6-f complex, which mediates electron transfer between photosystem II (PSII) and photosystem I (PSI), cyclic electron flow around PSI, and state transitions. PetL is important for photoautotrophic growth as well as for electron transfer efficiency and stability of the cytochrome b6-f complex. In Triticum aestivum (Wheat), this protein is Cytochrome b6-f complex subunit 6.